Consider the following 344-residue polypeptide: Tetraacyldisaccharide 4'-kinase (344 aa).

65–72 (HAGGTGKT) provides a ligand contact to ATP.

It belongs to the LpxK family.

The catalysed reaction is a lipid A disaccharide + ATP = a lipid IVA + ADP + H(+). Its pathway is glycolipid biosynthesis; lipid IV(A) biosynthesis; lipid IV(A) from (3R)-3-hydroxytetradecanoyl-[acyl-carrier-protein] and UDP-N-acetyl-alpha-D-glucosamine: step 6/6. Functionally, transfers the gamma-phosphate of ATP to the 4'-position of a tetraacyldisaccharide 1-phosphate intermediate (termed DS-1-P) to form tetraacyldisaccharide 1,4'-bis-phosphate (lipid IVA). The sequence is that of Tetraacyldisaccharide 4'-kinase from Neisseria meningitidis serogroup A / serotype 4A (strain DSM 15465 / Z2491).